A 231-amino-acid polypeptide reads, in one-letter code: Large ribosomal subunit protein uL1 (231 aa).

Belongs to the universal ribosomal protein uL1 family. In terms of assembly, part of the 50S ribosomal subunit.

Functionally, binds directly to 23S rRNA. The L1 stalk is quite mobile in the ribosome, and is involved in E site tRNA release. In terms of biological role, protein L1 is also a translational repressor protein, it controls the translation of the L11 operon by binding to its mRNA. The chain is Large ribosomal subunit protein uL1 from Buchnera aphidicola subsp. Acyrthosiphon pisum (strain APS) (Acyrthosiphon pisum symbiotic bacterium).